The sequence spans 402 residues: MSRRLFTSESVTEGHPDKIADQISDTILDALLREDPTSRVAVETLITTGLVHVAGEVTTKAYAPIAQLVRDKILEIGYDSSKKGFDGASCGVSVSIGSQSPDIAQGVDTAYENRVEGDEDELDRQGAGDQGLMFGYATDETPTLMPLPIHLAHRLSHRLSEVRKNGTIPYLRPDGKTQVTIEYDGDKAVRLDTVVVSSQHASDIDLDSLLAPDIREFVVEPELKALLDDGIKLETEGYRLLVNPTGRFEIGGPMGDAGLTGRKIIIDTYGGMARHGGGAFSGKDPSKVDRSAAYAMRWVAKNVVAAGLASRCEVQVAYAIGKAEPVGLFVETFGTAKVEADKIEQAIATVFDLRPAAIIRDLDLLRPIYSQTAAYGHFGRELPDFTWERTDRVDALRTAVGL.

His-15 lines the ATP pocket. Asp-17 contacts Mg(2+). A K(+)-binding site is contributed by Glu-43. Glu-56 and Gln-99 together coordinate L-methionine. Residues 99–109 (QSPDIAQGVDT) are flexible loop. Residues 174–176 (DGK), 247–248 (RF), Asp-256, 262–263 (RK), Ala-279, and Lys-283 contribute to the ATP site. Asp-256 lines the L-methionine pocket. Residue Lys-287 coordinates L-methionine.

Belongs to the AdoMet synthase family. As to quaternary structure, homotetramer; dimer of dimers. Mg(2+) serves as cofactor. The cofactor is K(+).

The protein localises to the cytoplasm. It carries out the reaction L-methionine + ATP + H2O = S-adenosyl-L-methionine + phosphate + diphosphate. It participates in amino-acid biosynthesis; S-adenosyl-L-methionine biosynthesis; S-adenosyl-L-methionine from L-methionine: step 1/1. Functionally, catalyzes the formation of S-adenosylmethionine (AdoMet) from methionine and ATP. The overall synthetic reaction is composed of two sequential steps, AdoMet formation and the subsequent tripolyphosphate hydrolysis which occurs prior to release of AdoMet from the enzyme. In Streptomyces avermitilis (strain ATCC 31267 / DSM 46492 / JCM 5070 / NBRC 14893 / NCIMB 12804 / NRRL 8165 / MA-4680), this protein is S-adenosylmethionine synthase.